A 45-amino-acid chain; its full sequence is Photosystem II reaction center protein K (45 aa).

Positions 1-8 are excised as a propeptide; it reads MNSALFLA. The helical transmembrane segment at 23–43 threads the bilayer; sequence ILPVIPVFFLLLAFVWQAAIG.

This sequence belongs to the PsbK family. As to quaternary structure, PSII is composed of 1 copy each of membrane proteins PsbA, PsbB, PsbC, PsbD, PsbE, PsbF, PsbH, PsbI, PsbJ, PsbK, PsbL, PsbM, PsbT, PsbX, PsbY, PsbZ, Psb30/Ycf12, at least 3 peripheral proteins of the oxygen-evolving complex and a large number of cofactors. It forms dimeric complexes.

The protein resides in the plastid. It localises to the chloroplast thylakoid membrane. Functionally, one of the components of the core complex of photosystem II (PSII). PSII is a light-driven water:plastoquinone oxidoreductase that uses light energy to abstract electrons from H(2)O, generating O(2) and a proton gradient subsequently used for ATP formation. It consists of a core antenna complex that captures photons, and an electron transfer chain that converts photonic excitation into a charge separation. The polypeptide is Photosystem II reaction center protein K (Porphyra purpurea (Red seaweed)).